We begin with the raw amino-acid sequence, 423 residues long: METEQAPRPAEPPGDLTTAITAPGEQLLTLLDRHLPRIRAQAAPNDRDSTFPAATFHGFARDGVLGATVPAELGGMGVSRLHDVAVALLRVAEADASTALALHAQFSRGITLTYEWLHGPPPTRKLAERLLRAMARGEAVIGGAVKDHGRETTRLRPDGSGGWLLSGRKTLVTMAPIATHFVVSAQAPAAGGTTLLYAPIVARDTPGLSIVDGWTGLGMRASGTLDVAFDDCPVPAGNLLARGSVGAHSDAALAGQAVSSVAMLGIYVGVAQAARDLAVETMARRSATPPAASRTLVAETEARLYALRATASAALVNVDELSPRHDMDPDERGRRMMTPFQCAKVMVNQLAAAVVDDCLTVVGGATYAAEHPLARLSRDVRAGRFMQPYTYADGVDYLSAQALGLERDNNYVSLRATRPVDSR.

Belongs to the acyl-CoA dehydrogenase family. It depends on FAD as a cofactor.

Its pathway is antibiotic biosynthesis. Nitrososynthase involved in the biosynthesis of rubradirin, an ansamycin antibiotic. In vitro, catalyzes the double-oxidation of TDP-L-epi-vancosamine to TDP-L-epi-vancosonitrose. In vivo, probably catalyzes the formation of D-rubranitrose, the nitro sugar moiety of rubradirin. The polypeptide is Amino sugar nitrososynthase RubN8 (Streptomyces rubradiris (Streptomyces achromogenes subsp. rubradiris)).